A 506-amino-acid chain; its full sequence is 2-isopropylmalate synthase (506 aa).

In terms of domain architecture, Pyruvate carboxyltransferase spans 4–266 (ILFMDTTLRD…EPSMTLKEIK (263 aa)). Aspartate 13, histidine 201, histidine 203, and asparagine 237 together coordinate Mn(2+). The tract at residues 390–506 (NITQLQVHFV…KLKSFIQLVK (117 aa)) is regulatory domain.

The protein belongs to the alpha-IPM synthase/homocitrate synthase family. LeuA type 1 subfamily. In terms of assembly, homodimer. Mn(2+) is required as a cofactor.

It localises to the cytoplasm. It catalyses the reaction 3-methyl-2-oxobutanoate + acetyl-CoA + H2O = (2S)-2-isopropylmalate + CoA + H(+). It functions in the pathway amino-acid biosynthesis; L-leucine biosynthesis; L-leucine from 3-methyl-2-oxobutanoate: step 1/4. In terms of biological role, catalyzes the condensation of the acetyl group of acetyl-CoA with 3-methyl-2-oxobutanoate (2-ketoisovalerate) to form 3-carboxy-3-hydroxy-4-methylpentanoate (2-isopropylmalate). This Bacillus cereus (strain 03BB102) protein is 2-isopropylmalate synthase.